A 269-amino-acid polypeptide reads, in one-letter code: Monofunctional glycosyltransferase (269 aa).

The chain crosses the membrane as a helical span at residues 46–66 (ILLTILIIIALFIGIMYFLST).

The protein belongs to the glycosyltransferase 51 family.

It is found in the cell membrane. The enzyme catalyses [GlcNAc-(1-&gt;4)-Mur2Ac(oyl-L-Ala-gamma-D-Glu-L-Lys-D-Ala-D-Ala)](n)-di-trans,octa-cis-undecaprenyl diphosphate + beta-D-GlcNAc-(1-&gt;4)-Mur2Ac(oyl-L-Ala-gamma-D-Glu-L-Lys-D-Ala-D-Ala)-di-trans,octa-cis-undecaprenyl diphosphate = [GlcNAc-(1-&gt;4)-Mur2Ac(oyl-L-Ala-gamma-D-Glu-L-Lys-D-Ala-D-Ala)](n+1)-di-trans,octa-cis-undecaprenyl diphosphate + di-trans,octa-cis-undecaprenyl diphosphate + H(+). Its pathway is cell wall biogenesis; peptidoglycan biosynthesis. Peptidoglycan polymerase that catalyzes glycan chain elongation using lipid-linked disaccharide-pentapeptide as the substrate. This is Monofunctional glycosyltransferase from Staphylococcus aureus (strain Newman).